Consider the following 269-residue polypeptide: Nuclear egress protein 2 (269 aa).

The Perinuclear space segment spans residues 1-247 (MSRRTYVRSE…VWKLALPVAN (247 aa)). Residues 248-268 (VTYALFIVIVLVVVLGAVLFW) form a helical membrane-spanning segment. Residue Lys-269 is a topological domain, nuclear.

Belongs to the herpesviridae NEC2 protein family. As to quaternary structure, forms a heterohexameric complex with NEC1. In terms of processing, phosphorylated.

It is found in the host nucleus inner membrane. Functionally, plays an essential role in virion nuclear egress, the first step of virion release from infected cell. Within the host nucleus, NEC1 interacts with the newly formed capsid through the vertexes and directs it to the inner nuclear membrane by associating with NEC2. Induces the budding of the capsid at the inner nuclear membrane as well as its envelopment into the perinuclear space. There, the NEC1/NEC2 complex promotes the fusion of the enveloped capsid with the outer nuclear membrane and the subsequent release of the viral capsid into the cytoplasm where it will reach the secondary budding sites in the host Golgi or trans-Golgi network. The sequence is that of Nuclear egress protein 2 from Homo sapiens (Human).